The following is an 88-amino-acid chain: Small ribosomal subunit protein uS17 (88 aa).

The protein belongs to the universal ribosomal protein uS17 family. In terms of assembly, part of the 30S ribosomal subunit.

Its function is as follows. One of the primary rRNA binding proteins, it binds specifically to the 5'-end of 16S ribosomal RNA. The chain is Small ribosomal subunit protein uS17 from Oenococcus oeni (strain ATCC BAA-331 / PSU-1).